The following is a 558-amino-acid chain: Adenine deaminase (558 aa).

Belongs to the metallo-dependent hydrolases superfamily. Adenine deaminase family. It depends on Mn(2+) as a cofactor.

It catalyses the reaction adenine + H2O + H(+) = hypoxanthine + NH4(+). The sequence is that of Adenine deaminase from Methanoregula boonei (strain DSM 21154 / JCM 14090 / 6A8).